Reading from the N-terminus, the 238-residue chain is MSQSLIVALDFPGKQEVEQFLHHFEGEELFVKVGMELFYKEGPAIITYLKEKGHKIFLDLKLHDIPNTVKSAMRSLASLDVDMVNVHAAGGSSMMKAAIEGLEEGKQEGKERPICIAVTQLTSTSEAMMKKEIGIEKTLEEAVAHYAKLTKESGLDGVVCSTLEVPKLREVCGNEFVTVTPGIRLASDDVNDQVRVATPKRARELGSSYIVVGRSITKAENPLEAYKTVKQQWEGVTV.

Residues aspartate 10, lysine 32, 59 to 68 (DLKLHDIPNT), threonine 122, arginine 184, glutamine 193, glycine 213, and arginine 214 each bind substrate. Catalysis depends on lysine 61, which acts as the Proton donor.

The protein belongs to the OMP decarboxylase family. Type 1 subfamily. In terms of assembly, homodimer.

It catalyses the reaction orotidine 5'-phosphate + H(+) = UMP + CO2. Its pathway is pyrimidine metabolism; UMP biosynthesis via de novo pathway; UMP from orotate: step 2/2. Catalyzes the decarboxylation of orotidine 5'-monophosphate (OMP) to uridine 5'-monophosphate (UMP). This is Orotidine 5'-phosphate decarboxylase from Bacillus cereus (strain B4264).